A 524-amino-acid polypeptide reads, in one-letter code: Mediator of RNA polymerase II transcription subunit 8 (524 aa).

Met-1 carries the N-acetylmethionine modification. Residues 137 to 162 are a coiled coil; that stretch reads MQIERLKARMDMIAAACENAERVLAD. Disordered regions lie at residues 291–315 and 474–524; these read VPSPQHQIQQQQFQQQQQRSKLMQL and MMQT…QNPQ. Low complexity-rich tracts occupy residues 295–315 and 474–505; these read QHQIQQQQFQQQQQRSKLMQL and MMQTQQTQIQQSQQQQQQQQQGGYGNMQTNQQ. A compositionally biased stretch (polar residues) spans 506 to 524; sequence SLQPNNMMQNAQQRHQNPQ.

The protein belongs to the Mediator complex subunit 8 family. As to quaternary structure, component of the Mediator complex.

Its subcellular location is the nucleus. In terms of biological role, component of the Mediator complex, a coactivator involved in the regulated transcription of nearly all RNA polymerase II-dependent genes. Mediator functions as a bridge to convey information from gene-specific regulatory proteins to the basal RNA polymerase II transcription machinery. The Mediator complex, having a compact conformation in its free form, is recruited to promoters by direct interactions with regulatory proteins and serves for the assembly of a functional preinitiation complex with RNA polymerase II and the general transcription factors. Regulator of both plant defense and flowering time. Involved in pollen tube growth. The chain is Mediator of RNA polymerase II transcription subunit 8 (MED8) from Arabidopsis thaliana (Mouse-ear cress).